Consider the following 179-residue polypeptide: Large ribosomal subunit protein uL6 (179 aa).

The protein belongs to the universal ribosomal protein uL6 family. Part of the 50S ribosomal subunit.

In terms of biological role, this protein binds to the 23S rRNA, and is important in its secondary structure. It is located near the subunit interface in the base of the L7/L12 stalk, and near the tRNA binding site of the peptidyltransferase center. The polypeptide is Large ribosomal subunit protein uL6 (Bifidobacterium animalis subsp. lactis (strain AD011)).